The sequence spans 228 residues: Geranylgeranylglyceryl phosphate synthase (228 aa).

Lys-13 contacts sn-glycerol 1-phosphate. 2 residues coordinate Mg(2+): Asp-15 and Thr-41. Sn-glycerol 1-phosphate-binding positions include 159-164 (YIEYSG), Gly-189, and 209-210 (GN).

Belongs to the GGGP/HepGP synthase family. Group I subfamily. Mg(2+) is required as a cofactor.

It is found in the cytoplasm. The catalysed reaction is sn-glycerol 1-phosphate + (2E,6E,10E)-geranylgeranyl diphosphate = sn-3-O-(geranylgeranyl)glycerol 1-phosphate + diphosphate. It functions in the pathway membrane lipid metabolism; glycerophospholipid metabolism. In terms of biological role, prenyltransferase that catalyzes the transfer of the geranylgeranyl moiety of geranylgeranyl diphosphate (GGPP) to the C3 hydroxyl of sn-glycerol-1-phosphate (G1P). This reaction is the first ether-bond-formation step in the biosynthesis of archaeal membrane lipids. This is Geranylgeranylglyceryl phosphate synthase from Methanospirillum hungatei JF-1 (strain ATCC 27890 / DSM 864 / NBRC 100397 / JF-1).